The sequence spans 205 residues: Large ribosomal subunit protein bL21 (205 aa).

The disordered stretch occupies residues A107–A137. The segment covering A122–A137 has biased composition (low complexity).

It belongs to the bacterial ribosomal protein bL21 family. As to quaternary structure, part of the 50S ribosomal subunit. Contacts protein L20.

In terms of biological role, this protein binds to 23S rRNA in the presence of protein L20. The protein is Large ribosomal subunit protein bL21 of Hyphomonas neptunium (strain ATCC 15444).